We begin with the raw amino-acid sequence, 233 residues long: Phosphoribosylformylglycinamidine synthase subunit PurQ (233 aa).

Residues 3-233 enclose the Glutamine amidotransferase type-1 domain; it reads SAVLVFPGIN…GLVEHLKTAA (231 aa). C87 functions as the Nucleophile in the catalytic mechanism. Active-site residues include H204 and E206.

In terms of assembly, part of the FGAM synthase complex composed of 1 PurL, 1 PurQ and 2 PurS subunits.

Its subcellular location is the cytoplasm. It carries out the reaction N(2)-formyl-N(1)-(5-phospho-beta-D-ribosyl)glycinamide + L-glutamine + ATP + H2O = 2-formamido-N(1)-(5-O-phospho-beta-D-ribosyl)acetamidine + L-glutamate + ADP + phosphate + H(+). It catalyses the reaction L-glutamine + H2O = L-glutamate + NH4(+). The protein operates within purine metabolism; IMP biosynthesis via de novo pathway; 5-amino-1-(5-phospho-D-ribosyl)imidazole from N(2)-formyl-N(1)-(5-phospho-D-ribosyl)glycinamide: step 1/2. Part of the phosphoribosylformylglycinamidine synthase complex involved in the purines biosynthetic pathway. Catalyzes the ATP-dependent conversion of formylglycinamide ribonucleotide (FGAR) and glutamine to yield formylglycinamidine ribonucleotide (FGAM) and glutamate. The FGAM synthase complex is composed of three subunits. PurQ produces an ammonia molecule by converting glutamine to glutamate. PurL transfers the ammonia molecule to FGAR to form FGAM in an ATP-dependent manner. PurS interacts with PurQ and PurL and is thought to assist in the transfer of the ammonia molecule from PurQ to PurL. In Rhodopseudomonas palustris (strain HaA2), this protein is Phosphoribosylformylglycinamidine synthase subunit PurQ.